Reading from the N-terminus, the 528-residue chain is Importin subunit alpha-7 (528 aa).

The IBB domain occupies Met1–Ser56. ARM repeat units lie at residues Asn93 to Ser133, Ser136 to Gly175, Pro178 to Arg218, Lys220 to Asp259, Asn262 to Thr301, Asp304 to Ala344, Gln347 to Ala386, and Tyr390 to Lys429.

It belongs to the importin alpha family. As to quaternary structure, forms a complex with importin subunit beta-1.

Its subcellular location is the nucleus envelope. Functionally, binds to conventional NLS motifs and mediates nuclear protein import across the nuclear envelope. Acts as a cellular receptor for the nuclear import of the virD2 protein of Agrobacterium, but is not essential for Agrobacterium-mediated root transformation. The protein is Importin subunit alpha-7 of Arabidopsis thaliana (Mouse-ear cress).